Reading from the N-terminus, the 190-residue chain is Imidazoleglycerol-phosphate dehydratase (190 aa).

This sequence belongs to the imidazoleglycerol-phosphate dehydratase family.

It is found in the cytoplasm. It carries out the reaction D-erythro-1-(imidazol-4-yl)glycerol 3-phosphate = 3-(imidazol-4-yl)-2-oxopropyl phosphate + H2O. The protein operates within amino-acid biosynthesis; L-histidine biosynthesis; L-histidine from 5-phospho-alpha-D-ribose 1-diphosphate: step 6/9. This Nitratiruptor sp. (strain SB155-2) protein is Imidazoleglycerol-phosphate dehydratase.